A 346-amino-acid chain; its full sequence is uncharacterized protein (346 aa).

This is an uncharacterized protein from Schizosaccharomyces pombe (strain 972 / ATCC 24843) (Fission yeast).